Reading from the N-terminus, the 387-residue chain is Protein disulfide isomerase pTAC5, chloroplastic (387 aa).

The transit peptide at 1–40 directs the protein to the chloroplast; the sequence is MASSSLPLSLPFPLRSLTSTTRSLPFQCSPLFFSIPSSIV. 2 coiled-coil regions span residues 72–106 and 143–163; these read EQRW…LGNS and REQI…AEEK. The CR-type zinc-finger motif lies at 318–387; that stretch reads PVDRSESTNT…CDVCDGKKNL (70 aa).

Interacts with HSP21; the formed complex associates with the plastid-encoded RNA polymerase (PEP) complex not only during transcription initiation, but also during elongation and termination, and with a stronger efficiency in illuminated chloroplasts. Binds to promoter regions of PEP-dependent genes, especially after a heat stress. Interacts with FLN2.

The protein resides in the plastid. Its subcellular location is the chloroplast stroma. It localises to the chloroplast nucleoid. The catalysed reaction is Catalyzes the rearrangement of -S-S- bonds in proteins.. In terms of biological role, exhibits zinc-dependent disulfide isomerase activity. Required for seedling and chloroplast development under heat stress, probably by maintaining plastid-encoded RNA polymerase (PEP)-dependent transcription. This Arabidopsis thaliana (Mouse-ear cress) protein is Protein disulfide isomerase pTAC5, chloroplastic.